The sequence spans 332 residues: Heptahelical transmembrane protein 1 (332 aa).

Residues 1 to 52 (MDQNGHNDEAETVSCGNGNCKSKIVPGDDHGGDESSGTKRRKKRKTQQKTMK) are disordered. The Cytoplasmic portion of the chain corresponds to 1–98 (MDQNGHNDEA…VFSFHNESLN (98 aa)). Positions 26–37 (PGDDHGGDESSG) are enriched in basic and acidic residues. Residues 38–52 (TKRRKKRKTQQKTMK) are compositionally biased toward basic residues. Residues 99–119 (VWTHLIGFIFFVALTVANIIH) traverse the membrane as a helical segment. The Extracellular segment spans residues 120-138 (HDGFFPVDAKSPGNVTRWP). Residues 139 to 159 (FFVFLGGSMFCLLASSICHLF) traverse the membrane as a helical segment. The Cytoplasmic segment spans residues 160–172 (CCHSKELNVFLLR). A helical membrane pass occupies residues 173 to 193 (IDYAGITAMIITSFFPPIFYI). Topologically, residues 194 to 199 (FQCTPR) are extracellular. The helical transmembrane segment at 200-220 (WYFIYLAGITSMGIFTIITLF) threads the bilayer. The Cytoplasmic segment spans residues 221–233 (TPSLSAPKYRAFR). Residues 234 to 254 (ALLFASMGLFGIVPAAHALVV) traverse the membrane as a helical segment. Topologically, residues 255 to 262 (NWGNPQRN) are extracellular. The helical transmembrane segment at 263 to 283 (VTLVYELLMAVFYLVGTGFYV) threads the bilayer. The Cytoplasmic portion of the chain corresponds to 284-303 (GRVPERLKPGWFDRVGHSHQ). A helical transmembrane segment spans residues 304-324 (IFHVFVLLGALSHYAAALLFL). The Extracellular portion of the chain corresponds to 325–332 (DWRDHVGC).

It belongs to the ADIPOR family. As to quaternary structure, interacts (via N-terminus) with SCRM/ICE1. Expressed in roots, hypocotyls, vasculature of cotyledons and leaves, hydathodes and guard cells. In reproductive organs, expressed in trichomes, veins of sepals, stamens and stigmata of pistils.

It localises to the membrane. Its function is as follows. May act as a negative regulator of abscisic acid (ABA)-mediated osmotic stress signaling and function in cross-talk between cold and osmotic signaling. In Arabidopsis thaliana (Mouse-ear cress), this protein is Heptahelical transmembrane protein 1 (HHP1).